A 311-amino-acid chain; its full sequence is Cell division protein FtsQ (311 aa).

A disordered region spans residues 1-28 (MTTRSPARPLIARRSTPAPTPAPHDPAP). At 1–46 (MTTRSPARPLIARRSTPAPTPAPHDPAPSRLSYRVTRLWLTPIFRK) the chain is on the cytoplasmic side. A helical transmembrane segment spans residues 47 to 67 (ALHLGIPVFALFAAVTWYLGD). Over 68 to 311 (ETRVAELFEA…AERPDGDTRG (244 aa)) the chain is Periplasmic. The POTRA domain maps to 91–159 (FRVNVLGIDG…GYLAVRIDER (69 aa)).

Belongs to the FtsQ/DivIB family. FtsQ subfamily.

The protein resides in the cell inner membrane. Essential cell division protein. In Jannaschia sp. (strain CCS1), this protein is Cell division protein FtsQ.